The following is a 60-amino-acid chain: Large ribosomal subunit protein uL30 (60 aa).

Belongs to the universal ribosomal protein uL30 family. In terms of assembly, part of the 50S ribosomal subunit.

The protein is Large ribosomal subunit protein uL30 of Nocardioides sp. (strain ATCC BAA-499 / JS614).